The sequence spans 1008 residues: G protein-regulated inducer of neurite outgrowth 1 (1008 aa).

The tract at residues 1-859 is disordered; sequence MDTAEDPAWL…SPPSRRDAGL (859 aa). Residue T60 is modified to Phosphothreonine. Phosphoserine is present on residues S64 and S75. A compositionally biased stretch (polar residues) spans 117-127; sequence ISGTPEATTSG. Composition is skewed to basic and acidic residues over residues 137–159, 167–178, 230–269, and 279–291; these read TEPKSSDDRNPMFLEKMDFKSSK, GKEDPGSSRKAD, PRKEDPGSLRKVDPVSSDKVDPVFPRKEEPRYSGKEHPVS, and EKVDLVLSGKRDP. Phosphoserine is present on S237. Polar residues-rich tracts occupy residues 326-336 and 391-406; these read SGKNGPVSSGT and HTDTTASAKTDLTSLK. S436 and S452 each carry phosphoserine. Basic and acidic residues predominate over residues 454 to 466; the sequence is GKEDPVSSRREDP. The span at 481–491 shows a compositional bias: polar residues; that stretch reads PESSGKTNPVS. Residues 549–559 show a composition bias toward basic and acidic residues; that stretch reads GKEDPVSKGKA. The residue at position 615 (S615) is a Phosphoserine. Residues 643–656 show a composition bias toward low complexity; that stretch reads PGQEGAAAPGEAGA. A compositionally biased stretch (basic and acidic residues) spans 659-679; that stretch reads LKKETPQASEKVDPGSCRKAE. At S737 the chain carries Phosphoserine. The segment covering 742 to 752 has biased composition (basic and acidic residues); sequence RGSEGRVEPKA. Positions 755 to 764 are enriched in polar residues; it reads VSSTEASSLG. S799 is modified (phosphoserine). Low complexity predominate over residues 838-847; sequence SAFSFQAAPR. At T877 the chain carries Phosphothreonine. Phosphoserine is present on residues S895 and S914. The segment at 899-1008 is interaction with GNAO1; it reads AAVAPPEPAE…CCSRAGPTAE (110 aa). The disordered stretch occupies residues 943-986; the sequence is ERQIEEHGRQGAPAPPPAARAGPGRSGSVRTAPPDGAAKRPPGL. Position 993 is a phosphoserine (S993). S-palmitoyl cysteine attachment occurs at residues C999 and C1000.

As to quaternary structure, interacts with activated forms of GNAI1, GNAO1 and GNAZ. Palmitoylation on Cys-999 and/or Cys-1000 is required for membrane targeting. Widely expressed in the central nervous system, with highest levels in spinal cord.

Its subcellular location is the cell membrane. It is found in the cell projection. The protein localises to the growth cone. Functionally, may be involved in neurite outgrowth. This chain is G protein-regulated inducer of neurite outgrowth 1 (GPRIN1), found in Homo sapiens (Human).